The chain runs to 1246 residues: Superkiller complex protein 2 (1246 aa).

The segment at 220 to 246 is disordered; the sequence is LGGGDEDENEAVGQPGGPRGDTVSASP. Phosphoserine occurs at positions 245 and 256. A Helicase ATP-binding domain is found at 319–475; that stretch reads ILHLERHDSV…WIGRLKRRQI (157 aa). 332-339 contacts ATP; sequence AHTSAGKT. The short motif at 423–426 is the DEVH box element; sequence DEVH. The Helicase C-terminal domain maps to 585-755; it reads GLTSLDLTTS…LTYTMILNLL (171 aa).

This sequence belongs to the helicase family. SKI2 subfamily. Component of the SKI complex which consists of SKIC2, SKIC3 and SKIC8. Interacts with HBS1L isoform 2.

The protein localises to the nucleus. Its subcellular location is the cytoplasm. It catalyses the reaction ATP + H2O = ADP + phosphate + H(+). Its function is as follows. Helicase component of the SKI complex, a multiprotein complex that assists the RNA-degrading exosome during the mRNA decay and quality-control pathways. The SKI complex catalyzes mRNA extraction from 80S ribosomal complexes in the 3'-5' direction and channels mRNA to the cytosolic exosome for degradation. SKI-mediated extraction of mRNA from stalled ribosomes allow binding of the Pelota-HBS1L complex and subsequent ribosome disassembly by ABCE1 for ribosome recycling. In the nucleus, the SKI complex associates with transcriptionally active genes in a manner dependent on PAF1 complex (PAF1C). This chain is Superkiller complex protein 2, found in Homo sapiens (Human).